Here is a 164-residue protein sequence, read N- to C-terminus: Putative 4-hydroxy-4-methyl-2-oxoglutarate aldolase (164 aa).

Residues 80-83 and R102 contribute to the substrate site; that span reads GGNL. A divalent metal cation is bound at residue D103.

This sequence belongs to the class II aldolase/RraA-like family. Homotrimer. The cofactor is a divalent metal cation.

The enzyme catalyses 4-hydroxy-4-methyl-2-oxoglutarate = 2 pyruvate. It carries out the reaction oxaloacetate + H(+) = pyruvate + CO2. Its function is as follows. Catalyzes the aldol cleavage of 4-hydroxy-4-methyl-2-oxoglutarate (HMG) into 2 molecules of pyruvate. Also contains a secondary oxaloacetate (OAA) decarboxylase activity due to the common pyruvate enolate transition state formed following C-C bond cleavage in the retro-aldol and decarboxylation reactions. The protein is Putative 4-hydroxy-4-methyl-2-oxoglutarate aldolase of Burkholderia multivorans (strain ATCC 17616 / 249).